The sequence spans 368 residues: tRNA-specific 2-thiouridylase MnmA (368 aa).

ATP-binding positions include Gly11–Ser18 and Met37. An interaction with target base in tRNA region spans residues Asn97–Asp99. Cys102 functions as the Nucleophile in the catalytic mechanism. An intrachain disulfide couples Cys102 to Cys199. Gly127 contacts ATP. An interaction with tRNA region spans residues Lys149–Gln151. The active-site Cysteine persulfide intermediate is the Cys199. The tract at residues Arg311–Tyr312 is interaction with tRNA.

Belongs to the MnmA/TRMU family. In terms of assembly, interacts with TusE.

It is found in the cytoplasm. The catalysed reaction is S-sulfanyl-L-cysteinyl-[protein] + uridine(34) in tRNA + AH2 + ATP = 2-thiouridine(34) in tRNA + L-cysteinyl-[protein] + A + AMP + diphosphate + H(+). Catalyzes the 2-thiolation of uridine at the wobble position (U34) of tRNA(Lys), tRNA(Glu) and tRNA(Gln), leading to the formation of s(2)U34, the first step of tRNA-mnm(5)s(2)U34 synthesis. Sulfur is provided by IscS, via a sulfur-relay system. Binds ATP and its substrate tRNAs. This is tRNA-specific 2-thiouridylase MnmA from Salmonella choleraesuis (strain SC-B67).